Reading from the N-terminus, the 275-residue chain is NH(3)-dependent NAD(+) synthetase (275 aa).

Position 46-53 (46-53 (GISGGQDS)) interacts with ATP. D52 contacts Mg(2+). Position 140 (R140) interacts with deamido-NAD(+). T160 provides a ligand contact to ATP. E165 serves as a coordination point for Mg(2+). Residues K173 and D180 each coordinate deamido-NAD(+). 2 residues coordinate ATP: K189 and T211. Residue 260-261 (HK) participates in deamido-NAD(+) binding.

The protein belongs to the NAD synthetase family. In terms of assembly, homodimer.

The enzyme catalyses deamido-NAD(+) + NH4(+) + ATP = AMP + diphosphate + NAD(+) + H(+). It participates in cofactor biosynthesis; NAD(+) biosynthesis; NAD(+) from deamido-NAD(+) (ammonia route): step 1/1. Its function is as follows. Catalyzes the ATP-dependent amidation of deamido-NAD to form NAD. Uses ammonia as a nitrogen source. In Cronobacter sakazakii (strain ATCC BAA-894) (Enterobacter sakazakii), this protein is NH(3)-dependent NAD(+) synthetase.